Here is a 126-residue protein sequence, read N- to C-terminus: Putative phosphotransferase enzyme IIB component UU178 (126 aa).

Residues 11-31 (LIIFLGIITFGIFIIYFFTKA) traverse the membrane as a helical segment. In terms of domain architecture, PTS EIIB type-1 spans 49 to 126 (PFSLNDFYNC…KELIKKDLFS (78 aa)).

This sequence to M.genitalium MG129 and M.pneumoniae MPN268.

The protein resides in the membrane. In terms of biological role, the phosphoenolpyruvate-dependent sugar phosphotransferase system (PTS), a major carbohydrate active -transport system, catalyzes the phosphorylation of incoming sugar substrates concomitant with their translocation across the cell membrane. This chain is Putative phosphotransferase enzyme IIB component UU178, found in Ureaplasma parvum serovar 3 (strain ATCC 700970).